A 249-amino-acid chain; its full sequence is tRNA (guanine-N(1)-)-methyltransferase (249 aa).

S-adenosyl-L-methionine contacts are provided by residues Gly-112 and 132–137 (LGDFVL).

The protein belongs to the RNA methyltransferase TrmD family. Homodimer.

It is found in the cytoplasm. It catalyses the reaction guanosine(37) in tRNA + S-adenosyl-L-methionine = N(1)-methylguanosine(37) in tRNA + S-adenosyl-L-homocysteine + H(+). Specifically methylates guanosine-37 in various tRNAs. The sequence is that of tRNA (guanine-N(1)-)-methyltransferase from Citrifermentans bemidjiense (strain ATCC BAA-1014 / DSM 16622 / JCM 12645 / Bem) (Geobacter bemidjiensis).